Here is a 557-residue protein sequence, read N- to C-terminus: Selenoprotein N (557 aa).

Positions 1–24 are disordered; that stretch reads MGQARPAARRPHSPDPGAQPAPPR. The first 42 residues, 1 to 42, serve as a signal peptide directing secretion; sequence MGQARPAARRPHSPDPGAQPAPPRRRARALALLGALLAAAAA. The EF-hand domain occupies 67–102; that stretch reads VLGTDGLFLFSSLDTDQDMYISPEEFKPIAEKLTGS. Residue asparagine 156 is glycosylated (N-linked (GlcNAc...) asparagine). A non-standard amino acid (selenocysteine) is located at residue selenocysteine 428. N-linked (GlcNAc...) asparagine glycans are attached at residues asparagine 449 and asparagine 497.

As to quaternary structure, interacts with RYR1, RYR2 and RYR3. N-glycosylated.

It is found in the endoplasmic reticulum membrane. Plays an important role in cell protection against oxidative stress and in the regulation of redox-related calcium homeostasis. Regulates the calcium level of the ER by protecting the calcium pump ATP2A2 against the oxidoreductase ERO1A-mediated oxidative damage. Within the ER, ERO1A activity increases the concentration of H(2)O(2), which attacks the luminal thiols in ATP2A2 and thus leads to cysteinyl sulfenic acid formation (-SOH) and SEPN1 reduces the SOH back to free thiol (-SH), thus restoring ATP2A2 activity. Acts as a modulator of ryanodine receptor (RyR) activity: protects RyR from oxidation due to increased oxidative stress, or directly controls the RyR redox state, regulating the RyR-mediated calcium mobilization required for normal muscle development and differentiation. Essential for muscle regeneration and satellite cell maintenance in skeletal muscle. The protein is Selenoprotein N of Mus musculus (Mouse).